A 392-amino-acid chain; its full sequence is DNA polymerase IV (392 aa).

Positions 6–186 constitute a UmuC domain; it reads IVHLDADAFF…LPIGKLPGVG (181 aa). D10 and D103 together coordinate Mg(2+). E104 is an active-site residue.

This sequence belongs to the DNA polymerase type-Y family. As to quaternary structure, monomer. Mg(2+) serves as cofactor.

It is found in the cytoplasm. The enzyme catalyses DNA(n) + a 2'-deoxyribonucleoside 5'-triphosphate = DNA(n+1) + diphosphate. Functionally, poorly processive, error-prone DNA polymerase involved in untargeted mutagenesis. Copies undamaged DNA at stalled replication forks, which arise in vivo from mismatched or misaligned primer ends. These misaligned primers can be extended by PolIV. Exhibits no 3'-5' exonuclease (proofreading) activity. May be involved in translesional synthesis, in conjunction with the beta clamp from PolIII. The sequence is that of DNA polymerase IV from Opitutus terrae (strain DSM 11246 / JCM 15787 / PB90-1).